The chain runs to 458 residues: Monomethylamine methyltransferase MtmB (458 aa).

Position 202 (Pyl-202) is a non-standard amino acid, pyrrolysine.

It belongs to the monomethylamine methyltransferase family. In terms of assembly, can form a complex with MtmC.

It catalyses the reaction Co(I)-[methylamine-specific corrinoid protein] + methylamine + H(+) = methyl-Co(III)-[methylamine-specific corrinoid protein] + NH4(+). It functions in the pathway one-carbon metabolism; methanogenesis from methylamine. Its function is as follows. Catalyzes the transfer of the methyl group from monomethylamine to the corrinoid cofactor of MtmC. This Methanosarcina mazei (strain ATCC BAA-159 / DSM 3647 / Goe1 / Go1 / JCM 11833 / OCM 88) (Methanosarcina frisia) protein is Monomethylamine methyltransferase MtmB (mtmB1).